The chain runs to 361 residues: Chorismate synthase (361 aa).

2 residues coordinate NADP(+): arginine 48 and arginine 54. FMN-binding positions include 125–127 (RSS), 238–239 (NA), glycine 278, 293–297 (KPTSS), and arginine 319.

It belongs to the chorismate synthase family. In terms of assembly, homotetramer. FMNH2 is required as a cofactor.

It catalyses the reaction 5-O-(1-carboxyvinyl)-3-phosphoshikimate = chorismate + phosphate. The protein operates within metabolic intermediate biosynthesis; chorismate biosynthesis; chorismate from D-erythrose 4-phosphate and phosphoenolpyruvate: step 7/7. In terms of biological role, catalyzes the anti-1,4-elimination of the C-3 phosphate and the C-6 proR hydrogen from 5-enolpyruvylshikimate-3-phosphate (EPSP) to yield chorismate, which is the branch point compound that serves as the starting substrate for the three terminal pathways of aromatic amino acid biosynthesis. This reaction introduces a second double bond into the aromatic ring system. This is Chorismate synthase from Citrobacter koseri (strain ATCC BAA-895 / CDC 4225-83 / SGSC4696).